We begin with the raw amino-acid sequence, 140 residues long: Alpha-lactalbumin (140 aa).

The N-terminal stretch at 1-19 is a signal peptide; the sequence is MMSLLPLLLIGIVLPATQA. A C-type lysozyme domain is found at 20-140; sequence KDYGKCELNQ…CRENLDQWNC (121 aa). 4 disulfides stabilise this stretch: C25/C140, C47/C131, C80/C96, and C92/C110. Residues K98, D101, D103, D106, and D107 each coordinate Ca(2+).

In terms of assembly, lactose synthase (LS) is a heterodimer of a catalytic component, beta1,4-galactosyltransferase (beta4Gal-T1) and a regulatory component, alpha-lactalbumin (LA). In terms of tissue distribution, mammary gland specific. Secreted in milk.

It localises to the secreted. Regulatory subunit of lactose synthase, changes the substrate specificity of galactosyltransferase in the mammary gland making glucose a good acceptor substrate for this enzyme. This enables LS to synthesize lactose, the major carbohydrate component of milk. In other tissues, galactosyltransferase transfers galactose onto the N-acetylglucosamine of the oligosaccharide chains in glycoproteins. The protein is Alpha-lactalbumin (LALBA) of Trichosurus vulpecula (Brush-tailed possum).